Here is a 136-residue protein sequence, read N- to C-terminus: Small ribosomal subunit protein uS9 (136 aa).

Residues 97–136 (SPDNRKPLKTEGHLSRDPRAKERRKYGLKKARKAPQFSKR) are disordered. The segment covering 98–116 (PDNRKPLKTEGHLSRDPRA) has biased composition (basic and acidic residues). Residues 117–136 (KERRKYGLKKARKAPQFSKR) are compositionally biased toward basic residues.

Belongs to the universal ribosomal protein uS9 family.

The polypeptide is Small ribosomal subunit protein uS9 (Prochlorococcus marinus (strain MIT 9215)).